A 254-amino-acid polypeptide reads, in one-letter code: uncharacterized protein (254 aa).

Positions 163–182 (PNKHTQHKRSTRRTSPKDYN) are disordered. A compositionally biased stretch (basic residues) spans 166-176 (HTQHKRSTRRT). Residues 207–227 (AHSAWILIIIIIIIVVILFFF) traverse the membrane as a helical segment.

The protein belongs to the RL11 family.

Its subcellular location is the host membrane. This is an uncharacterized protein from Human cytomegalovirus (strain Merlin) (HHV-5).